The primary structure comprises 289 residues: Ribonuclease Z (289 aa).

Positions 63, 65, 67, 68, 143, 197, and 255 each coordinate Zn(2+). The active-site Proton acceptor is Asp67.

The protein belongs to the RNase Z family. Homodimer. The cofactor is Zn(2+).

It carries out the reaction Endonucleolytic cleavage of RNA, removing extra 3' nucleotides from tRNA precursor, generating 3' termini of tRNAs. A 3'-hydroxy group is left at the tRNA terminus and a 5'-phosphoryl group is left at the trailer molecule.. In terms of biological role, zinc phosphodiesterase, which displays some tRNA 3'-processing endonuclease activity. Probably involved in tRNA maturation, by removing a 3'-trailer from precursor tRNA. The chain is Ribonuclease Z from Azobacteroides pseudotrichonymphae genomovar. CFP2.